The following is a 938-amino-acid chain: Isoleucine--tRNA ligase (938 aa).

The 'HIGH' region motif lies at 58 to 68 (PYANGSIHIGH). Lys183 bears the N6-acetyllysine mark. Glu561 provides a ligand contact to L-isoleucyl-5'-AMP. Positions 602–606 (KMSKS) match the 'KMSKS' region motif. ATP is bound at residue Lys605. 4 residues coordinate Zn(2+): Cys901, Cys904, Cys921, and Cys924.

Belongs to the class-I aminoacyl-tRNA synthetase family. IleS type 1 subfamily. Monomer. The cofactor is Zn(2+).

It is found in the cytoplasm. It carries out the reaction tRNA(Ile) + L-isoleucine + ATP = L-isoleucyl-tRNA(Ile) + AMP + diphosphate. Its function is as follows. Catalyzes the attachment of isoleucine to tRNA(Ile). As IleRS can inadvertently accommodate and process structurally similar amino acids such as valine, to avoid such errors it has two additional distinct tRNA(Ile)-dependent editing activities. One activity is designated as 'pretransfer' editing and involves the hydrolysis of activated Val-AMP. The other activity is designated 'posttransfer' editing and involves deacylation of mischarged Val-tRNA(Ile). The protein is Isoleucine--tRNA ligase of Escherichia coli O127:H6 (strain E2348/69 / EPEC).